We begin with the raw amino-acid sequence, 310 residues long: Small ribosomal subunit biogenesis GTPase RsgA (310 aa).

Residues 77–238 (LSKQSHILAA…IIDTPGIKGF (162 aa)) enclose the CP-type G domain. GTP contacts are provided by residues 126 to 129 (NKVD) and 180 to 188 (GHSGVGKST). The Zn(2+) site is built by C262, C267, H269, and C275.

This sequence belongs to the TRAFAC class YlqF/YawG GTPase family. RsgA subfamily. As to quaternary structure, monomer. Associates with 30S ribosomal subunit, binds 16S rRNA. Zn(2+) is required as a cofactor.

It is found in the cytoplasm. Its function is as follows. One of several proteins that assist in the late maturation steps of the functional core of the 30S ribosomal subunit. Helps release RbfA from mature subunits. May play a role in the assembly of ribosomal proteins into the subunit. Circularly permuted GTPase that catalyzes slow GTP hydrolysis, GTPase activity is stimulated by the 30S ribosomal subunit. The protein is Small ribosomal subunit biogenesis GTPase RsgA of Bacteroides fragilis (strain ATCC 25285 / DSM 2151 / CCUG 4856 / JCM 11019 / LMG 10263 / NCTC 9343 / Onslow / VPI 2553 / EN-2).